Reading from the N-terminus, the 85-residue chain is ATP synthase subunit 9, mitochondrial (85 aa).

2 helical membrane passes run 19–39 (IGAGAATIALAGAAIGIGNVF) and 61–81 (ILGFALTEAIALFALMMAFLI).

The protein belongs to the ATPase C chain family. In terms of assembly, F-type ATPases have 2 components, CF(1) - the catalytic core - and CF(0) - the membrane proton channel. CF(1) has five subunits: alpha(3), beta(3), gamma(1), delta(1), epsilon(1). CF(0) has three main subunits: a, b and c.

The protein resides in the mitochondrion membrane. Its function is as follows. This protein is one of the chains of the nonenzymatic membrane component (F0) of mitochondrial ATPase. This is ATP synthase subunit 9, mitochondrial (ATP9) from Arabidopsis thaliana (Mouse-ear cress).